The primary structure comprises 251 residues: MVRNMKMKKSNEWLWLGTKIINAHKTNGFESAIIFGKQGTGKTTYALKVAKEVYQRLGHEPDKAWELALDSLFFELKDALRIMKIFRQNDRTIPIIIFDDAGIWLQKYLWYKEEMIKFYRIYNIIRNIVSGVIFTTPSPNDIAFYVREKGWKLIMITRNGRQPDGTPKAVAKIAVNKITIIKGKITNKMKWRTVDDYTVKLPDWVYKEYVERRKVYEEKLLEELDEVLDSDNKTENPSNPSLLTKIDDVTR.

Position 36–43 (36–43 (GKQGTGKT)) interacts with ATP. A disordered region spans residues 230–251 (SDNKTENPSNPSLLTKIDDVTR).

Functionally, this protein may be involved in virus assembly. Essential for virus function. This is an uncharacterized protein from Sulfolobus spindle-shape virus 1 (SSV1).